The primary structure comprises 156 residues: Longistatin (156 aa).

A signal peptide spans M1–A21. EF-hand domains lie at S70–H105 and D123–I156. The Ca(2+) site is built by D83, D85, N87, K89, E94, D135, N137, D139, F141, and E146.

Interacts with host fibrin. Interacts with human RAGE/AGER. Saliva (at protein level). Salivary gland (at protein level). Not detected in midgut, ovary, trachea, Malpighian tubule system, synganglion and cuticle.

It localises to the secreted. It is found in the cytoplasm. Resistant to inhibition by host SERPINE1. Inhibited by PMSF, aprotinin, antipain and leupeptin. Inhibited by Zn(2+). In terms of biological role, anticoagulant and fibrinolytic protease that modulates blood feeding of ticks on vertebrate hosts. Degrades host fibrinogen and delays fibrin clot formation. Promotes lysis of fibrin clots in the host by activating host plasminogen in the presence of soluble fibrin. Binds Ca(2+). Hydrolyzes serine protease-specific substrates. Required for the formation of a blood pool, an accumulation of blood and tissue fluid developed at the tick's feeding site. Blocks activation of host AGER/RAGE. Reduces AGER/RAGE-dependent production of reactive oxygen species (ROS) in human endothelial cells. Prevents AGER/RAGE-dependent activation of NF-kappa-B and suppresses expression of adhesion molecules, such as VCAM1, ICAM1 and SELE, and secretion of cytokines, such as CSF3/GCSF and TGF-beta, in human endothelial cells. Suppresses RAGE/AGER-mediated migration of mouse peritoneal resident cells. Reduces AGER/RAGE-mediated inflammation in mice tissues. The sequence is that of Longistatin from Haemaphysalis longicornis (Bush tick).